A 514-amino-acid chain; its full sequence is 2,3-bisphosphoglycerate-independent phosphoglycerate mutase (514 aa).

Positions 14 and 64 each coordinate Mn(2+). S64 acts as the Phosphoserine intermediate in catalysis. Residues H125, 155–156 (RD), R187, R193, 263–266 (RADR), and K336 contribute to the substrate site. Mn(2+) is bound by residues D403, H407, D444, H445, and H463.

Belongs to the BPG-independent phosphoglycerate mutase family. As to quaternary structure, monomer. The cofactor is Mn(2+).

It catalyses the reaction (2R)-2-phosphoglycerate = (2R)-3-phosphoglycerate. It participates in carbohydrate degradation; glycolysis; pyruvate from D-glyceraldehyde 3-phosphate: step 3/5. Its function is as follows. Catalyzes the interconversion of 2-phosphoglycerate and 3-phosphoglycerate. The chain is 2,3-bisphosphoglycerate-independent phosphoglycerate mutase from Shewanella baltica (strain OS195).